A 274-amino-acid chain; its full sequence is Type II restriction enzyme XamI (274 aa).

It carries out the reaction Endonucleolytic cleavage of DNA to give specific double-stranded fragments with terminal 5'-phosphates.. Functionally, a P subtype restriction enzyme that recognizes the double-stranded sequence 5'-GTCGAC-3' and cleaves after G-1. The protein is Type II restriction enzyme XamI (xamIR) of Xanthomonas campestris pv. amaranthicola.